The primary structure comprises 101 residues: Urease subunit beta (101 aa).

It belongs to the urease beta subunit family. As to quaternary structure, heterotrimer of UreA (gamma), UreB (beta) and UreC (alpha) subunits. Three heterotrimers associate to form the active enzyme.

The protein resides in the cytoplasm. It catalyses the reaction urea + 2 H2O + H(+) = hydrogencarbonate + 2 NH4(+). It functions in the pathway nitrogen metabolism; urea degradation; CO(2) and NH(3) from urea (urease route): step 1/1. This chain is Urease subunit beta, found in Psychromonas ingrahamii (strain DSM 17664 / CCUG 51855 / 37).